The chain runs to 378 residues: Protein RecA (378 aa).

65-72 (GPESSGKT) is an ATP binding site. Positions 325-378 (AYGMDQTGEEDDQADDKSKDKATKPSDKSQAQAKPKKPVATETSLDLDDSKTDK) are disordered. Over residues 339 to 351 (DDKSKDKATKPSD) the composition is skewed to basic and acidic residues.

This sequence belongs to the RecA family.

It localises to the cytoplasm. In terms of biological role, can catalyze the hydrolysis of ATP in the presence of single-stranded DNA, the ATP-dependent uptake of single-stranded DNA by duplex DNA, and the ATP-dependent hybridization of homologous single-stranded DNAs. It interacts with LexA causing its activation and leading to its autocatalytic cleavage. The protein is Protein RecA of Lactiplantibacillus pentosus (Lactobacillus pentosus).